The chain runs to 467 residues: Ankyrin repeat and SOCS box protein 10 (467 aa).

ANK repeat units follow at residues 115–144, 147–176, 180–209, 214–243, 247–289, 293–322, and 326–361; these read ELTT…KPDS, GGRT…DPNT, DGKR…QVDG, EEET…CPDV, EGWT…DADA, DKQR…NANA, and GGHT…AVRV. An SOCS box domain is found at 412 to 467; that stretch reads YSSLFALVRQPRSLQHLCRCALRSHLEGCLPHALPRLPLPPRMLRFLQLDFEDLLY.

Belongs to the ankyrin SOCS box (ASB) family.

It localises to the nucleus. It is found in the cytoplasm. Its pathway is protein modification; protein ubiquitination. In terms of biological role, may be a substrate-recognition component of a SCF-like ECS (Elongin-Cullin-SOCS-box protein) E3 ubiquitin-protein ligase complex which mediates the ubiquitination and subsequent proteasomal degradation of target proteins. The polypeptide is Ankyrin repeat and SOCS box protein 10 (Asb10) (Mus musculus (Mouse)).